We begin with the raw amino-acid sequence, 277 residues long: Protein G1-like2 (277 aa).

The segment covering 1–16 (MQGGGGGDSSGGGGGE) has biased composition (gly residues). Disordered stretches follow at residues 1-28 (MQGG…SQKR), 141-203 (RGIA…GHFF), and 225-245 (HQVS…TNTG). The span at 19–28 (RPSRYESQKR) shows a compositional bias: basic and acidic residues. The region spanning 22–149 (RYESQKRRDW…ARGIAYEKKR (128 aa)) is the ALOG domain. The short motif at 147–151 (KKRRK) is the Nuclear localization signal element. A compositionally biased stretch (low complexity) spans 154–177 (PTSSSSSQAAAAAAAATSPASPAA). The span at 178 to 187 (SPTPPPPPPT) shows a compositional bias: pro residues.

Belongs to the plant homeotic and developmental regulators ALOG protein family.

It localises to the nucleus. Functionally, probable transcription regulator that acts as a developmental regulator by promoting cell growth in response to light. This chain is Protein G1-like2 (G1L2), found in Oryza sativa subsp. japonica (Rice).